A 201-amino-acid polypeptide reads, in one-letter code: dITP/XTP pyrophosphatase (201 aa).

Position 8–13 (8–13) interacts with substrate; the sequence is TNNENK. Residues Glu41 and Asp73 each coordinate Mg(2+). Asp73 acts as the Proton acceptor in catalysis. Residues Ser74, 154–157, Lys177, and 182–183 contribute to the substrate site; these read FGYD and HR.

It belongs to the HAM1 NTPase family. As to quaternary structure, homodimer. Requires Mg(2+) as cofactor.

It carries out the reaction XTP + H2O = XMP + diphosphate + H(+). The enzyme catalyses dITP + H2O = dIMP + diphosphate + H(+). The catalysed reaction is ITP + H2O = IMP + diphosphate + H(+). In terms of biological role, pyrophosphatase that catalyzes the hydrolysis of nucleoside triphosphates to their monophosphate derivatives, with a high preference for the non-canonical purine nucleotides XTP (xanthosine triphosphate), dITP (deoxyinosine triphosphate) and ITP. Seems to function as a house-cleaning enzyme that removes non-canonical purine nucleotides from the nucleotide pool, thus preventing their incorporation into DNA/RNA and avoiding chromosomal lesions. The sequence is that of dITP/XTP pyrophosphatase from Clostridium tetani (strain Massachusetts / E88).